A 448-amino-acid chain; its full sequence is Na(+)-malate symporter (448 aa).

11 consecutive transmembrane segments (helical) span residues 31 to 51 (IGVI…LAAY), 60 to 80 (LGGF…GQRI), 86 to 106 (IGGP…YNVL), 123 to 143 (FLYF…NRIV), 153 to 173 (VPLV…GFIF), 182 to 202 (FFVV…PLSI), 214 to 234 (VFVS…IICA), 276 to 293 (LMGA…FGGL), 297 to 319 (FIFI…ANIL), 333 to 353 (FISS…FIPL), and 359 to 379 (VISI…IGSG).

This sequence belongs to the 2-hydroxycarboxylate transporter (2-HCT) (TC 2.A.24) family.

The protein localises to the cell membrane. Acts as a Na(+)-malate symporter, as it catalyzes malate-dependent uptake of Na(+) and Na(+)-dependent uptake of malate. This Bacillus subtilis (strain 168) protein is Na(+)-malate symporter.